The chain runs to 287 residues: Glycine--tRNA ligase alpha subunit (287 aa).

It belongs to the class-II aminoacyl-tRNA synthetase family. Tetramer of two alpha and two beta subunits.

The protein resides in the cytoplasm. The enzyme catalyses tRNA(Gly) + glycine + ATP = glycyl-tRNA(Gly) + AMP + diphosphate. In Campylobacter jejuni (strain RM1221), this protein is Glycine--tRNA ligase alpha subunit.